The following is a 284-amino-acid chain: Nucleotide-binding protein Shewmr4_0670 (284 aa).

ATP is bound at residue 8-15 (GRSGSGKS). GTP is bound at residue 56-59 (DVRN).

Belongs to the RapZ-like family.

Displays ATPase and GTPase activities. In Shewanella sp. (strain MR-4), this protein is Nucleotide-binding protein Shewmr4_0670.